The following is a 446-amino-acid chain: Na(+)-translocating NADH-quinone reductase subunit A (446 aa).

Belongs to the NqrA family. Composed of six subunits; NqrA, NqrB, NqrC, NqrD, NqrE and NqrF.

The enzyme catalyses a ubiquinone + n Na(+)(in) + NADH + H(+) = a ubiquinol + n Na(+)(out) + NAD(+). NQR complex catalyzes the reduction of ubiquinone-1 to ubiquinol by two successive reactions, coupled with the transport of Na(+) ions from the cytoplasm to the periplasm. NqrA to NqrE are probably involved in the second step, the conversion of ubisemiquinone to ubiquinol. The chain is Na(+)-translocating NADH-quinone reductase subunit A from Vibrio cholerae serotype O1 (strain ATCC 39541 / Classical Ogawa 395 / O395).